The chain runs to 394 residues: Small ribosomal subunit protein mS79 (rPPR3b) (394 aa).

The transit peptide at 1–24 (MSSLSRFLLRGNFSFSTHTNRRFF) directs the protein to the mitochondrion. PPR repeat units lie at residues 105–139 (KEGFVARIINLYGRVGMFENAQKVFDEMPERNCKR), 140–170 (TALSFNALLNACVNSKKFDLVEGIFKELPGK), 176–210 (DVASYNTLIKGLCGKGSFTEAVALIDEIENKGLKP), 211–245 (DHITFNILLHESYTKGKFEEGEQIWARMVEKNVKR), 246–280 (DIRSYNARLLGLAMENKSEEMVSLFDKLKGNELKP), 281–315 (DVFTFTAMIKGFVSEGKLDEAITWYKEIEKNGCRP), 316–350 (LKFVFNSLLPAICKAGDLESAYELCKEIFAKRLLV), and 351–385 (DEAVLQEVVDALVKGSKQDEAEEIVELAKTNDYLQ).

Belongs to the PPR family. P subfamily. In terms of assembly, component of the mitochondrial ribosome small subunit.

It localises to the mitochondrion. In Arabidopsis thaliana (Mouse-ear cress), this protein is Small ribosomal subunit protein mS79 (rPPR3b).